A 124-amino-acid chain; its full sequence is Small ribosomal subunit protein uS13 (124 aa).

Residues 98–124 (VRGQRTRCNARTRKGPRKTVGAKRKEK) are disordered.

The protein belongs to the universal ribosomal protein uS13 family. As to quaternary structure, part of the 30S ribosomal subunit. Forms a loose heterodimer with protein S19. Forms two bridges to the 50S subunit in the 70S ribosome.

Located at the top of the head of the 30S subunit, it contacts several helices of the 16S rRNA. In the 70S ribosome it contacts the 23S rRNA (bridge B1a) and protein L5 of the 50S subunit (bridge B1b), connecting the 2 subunits; these bridges are implicated in subunit movement. Contacts the tRNAs in the A and P-sites. This chain is Small ribosomal subunit protein uS13, found in Dictyoglomus turgidum (strain DSM 6724 / Z-1310).